Reading from the N-terminus, the 457-residue chain is Methylenetetrahydrofolate--tRNA-(uracil-5-)-methyltransferase TrmFO (457 aa).

Glycine 7–glycine 12 provides a ligand contact to FAD. The tract at residues phenylalanine 38–arginine 58 is disordered. Positions serine 40 to arginine 52 are enriched in basic and acidic residues.

The protein belongs to the MnmG family. TrmFO subfamily. Requires FAD as cofactor.

It is found in the cytoplasm. It carries out the reaction uridine(54) in tRNA + (6R)-5,10-methylene-5,6,7,8-tetrahydrofolate + NADH + H(+) = 5-methyluridine(54) in tRNA + (6S)-5,6,7,8-tetrahydrofolate + NAD(+). The enzyme catalyses uridine(54) in tRNA + (6R)-5,10-methylene-5,6,7,8-tetrahydrofolate + NADPH + H(+) = 5-methyluridine(54) in tRNA + (6S)-5,6,7,8-tetrahydrofolate + NADP(+). Functionally, catalyzes the folate-dependent formation of 5-methyl-uridine at position 54 (M-5-U54) in all tRNAs. This Hydrogenobaculum sp. (strain Y04AAS1) protein is Methylenetetrahydrofolate--tRNA-(uracil-5-)-methyltransferase TrmFO.